The chain runs to 512 residues: Putative ribose/galactose/methyl galactoside import ATP-binding protein 2 (512 aa).

ABC transporter domains follow at residues 14-251 (IALT…VGRQ) and 262-507 (TSGN…TQRE). 46–53 (GENGAGKS) is an ATP binding site.

It belongs to the ABC transporter superfamily. Carbohydrate importer 2 (CUT2) (TC 3.A.1.2) family.

The protein resides in the cell inner membrane. It catalyses the reaction D-ribose(out) + ATP + H2O = D-ribose(in) + ADP + phosphate + H(+). It carries out the reaction D-galactose(out) + ATP + H2O = D-galactose(in) + ADP + phosphate + H(+). Its function is as follows. Part of an ABC transporter complex involved in carbohydrate import. Could be involved in ribose, galactose and/or methyl galactoside import. Responsible for energy coupling to the transport system. The sequence is that of Putative ribose/galactose/methyl galactoside import ATP-binding protein 2 from Burkholderia cenocepacia (strain HI2424).